A 475-amino-acid polypeptide reads, in one-letter code: Ribulose bisphosphate carboxylase large chain (475 aa).

Residues 1-2 (MS) constitute a propeptide that is removed on maturation. An N-acetylproline modification is found at P3. K14 is subject to N6,N6,N6-trimethyllysine. Residues N123 and T173 each contribute to the substrate site. The Proton acceptor role is filled by K175. K177 serves as a coordination point for substrate. Mg(2+) contacts are provided by K201, D203, and E204. Residue K201 is modified to N6-carboxylysine. H294 acts as the Proton acceptor in catalysis. Residues R295, H327, and S379 each coordinate substrate.

Belongs to the RuBisCO large chain family. Type I subfamily. As to quaternary structure, heterohexadecamer of 8 large chains and 8 small chains; disulfide-linked. The disulfide link is formed within the large subunit homodimers. Mg(2+) serves as cofactor. The disulfide bond which can form in the large chain dimeric partners within the hexadecamer appears to be associated with oxidative stress and protein turnover.

The protein resides in the plastid. The protein localises to the chloroplast. It catalyses the reaction 2 (2R)-3-phosphoglycerate + 2 H(+) = D-ribulose 1,5-bisphosphate + CO2 + H2O. The catalysed reaction is D-ribulose 1,5-bisphosphate + O2 = 2-phosphoglycolate + (2R)-3-phosphoglycerate + 2 H(+). In terms of biological role, ruBisCO catalyzes two reactions: the carboxylation of D-ribulose 1,5-bisphosphate, the primary event in carbon dioxide fixation, as well as the oxidative fragmentation of the pentose substrate in the photorespiration process. Both reactions occur simultaneously and in competition at the same active site. The chain is Ribulose bisphosphate carboxylase large chain (rbcL) from Marchantia polymorpha (Common liverwort).